The following is a 648-amino-acid chain: Protein associated with UVRAG as autophagy enhancer (648 aa).

Polar residues-rich tracts occupy residues 131–146 (QESL…TSPS) and 157–173 (PHLT…SSSR). A disordered region spans residues 131-173 (QESLLKNPKTVATSPSPKEGSARSESPHLTASTDDGDARSSSR). Phosphoserine is present on Ser144. The interaction with UVRAG stretch occupies residues 183–222 (ETFMLPADVEKENLHFYAADIIISVIENMKCNLPNQQQPE). An N6-acetyllysine mark is found at Lys469, Lys509, Lys519, Lys559, and Lys619.

Interacts with UVRAG; the interaction is direct and promotes association with the PI3K/PI3KC3 and HOPS complexes. Interacts with STX17. Post-translationally, phosphorylated by MTOR at Ser-144 under nutrient-rich conditions. Phosphorylation prevents acetylation by KAT5/TIP60 and impairs RUBCNL/PACER function and autophagosome maturation. Under autophagy induction, Phosphorylation by MTOR is repressed, enabling acetylation by KAT5/TIP60. Acetylated by KAT5/TIP60 under autophagy induction, promoting autophagosome maturation and lipid metabolism. Acetylation is prevented by phosphorylation by MTOR. Lys-469 and Lys-559 constitute the key sites for tuning function in autophagy.

It is found in the cytoplasmic vesicle. It localises to the autophagosome membrane. In terms of biological role, regulator of autophagy that promotes autophagosome maturation by facilitating the biogenesis of phosphatidylinositol 3-phosphate (PtdIns(3)P) in late steps of autophagy. Acts by antagonizing RUBCN, thereby stimulating phosphatidylinositol 3-kinase activity of the PI3K/PI3KC3 complex. Following anchorage to the autophagosomal SNARE STX17, promotes the recruitment of PI3K/PI3KC3 and HOPS complexes to the autophagosome to regulate the fusion specificity of autophagosomes with late endosomes/lysosomes. Binds phosphoinositides phosphatidylinositol 3-phosphate (PtdIns(3)P), 4-phosphate (PtdIns(4)P) and 5-phosphate (PtdIns(5)P). In addition to its role in autophagy, acts as a regulator of lipid and glycogen homeostasis. May act as a tumor suppressor. This chain is Protein associated with UVRAG as autophagy enhancer, found in Mus musculus (Mouse).